The following is a 563-amino-acid chain: Inclusion membrane protein M (563 aa).

Residues 1 to 36 are Cytoplasmic-facing; that stretch reads MVYFRAHQPRHTPKTFPLEVHHSFSDKHPQIAKAMR. The chain crosses the membrane as a helical span at residues 37-57; it reads ITGIALAALSLLAVVACVIAV. A topological domain (vacuolar) is located at residue Ser58. The helical transmembrane segment at 59–79 threads the bilayer; it reads AGGAAIPLAVISGIAVMSGLL. The Cytoplasmic portion of the chain corresponds to 80 to 252; that stretch reads SAATIICSAK…VLKVALSLGV (173 aa). Residues 253–273 form a helical membrane-spanning segment; that stretch reads LAGVAALIIFLPPSLPFIAVI. Gly274 is a topological domain (vacuolar). A helical transmembrane segment spans residues 275-295; sequence VSSLALGMASFLMIRGIKYLL. The Cytoplasmic segment spans residues 296-563; sequence EHSPLNRKQL…QLAQYLLDNH (268 aa).

It belongs to the chlamydial CPn_0065/CT_288/TC_0561 family. Interacts with host CCDC146. In host cells infected with C.trachomatis incM, CCDC146 is recruited to the periphery of the pathogen-containing vacuole but recruitment is not dependent on incM.

The protein resides in the host vacuole. It is found in the host pathogen-containing vacuole. Its subcellular location is the host pathogen-containing vacuole membrane. The protein localises to the host pathogen-containing vacuole lumen. It localises to the secreted. In terms of biological role, interferes with host cell cytokinesis, centrosome positioning and Golgi distribution, and contributes to the morphology and stability of the pathogen-containing vacuole. May exert its effects by acting directly or indirectly on host microtubules. The polypeptide is Inclusion membrane protein M (Chlamydia trachomatis serovar D (strain ATCC VR-885 / DSM 19411 / UW-3/Cx)).